A 676-amino-acid chain; its full sequence is MAAAKVALTKRADPAELKAIFLKYASIEKNGEFFMSPHDFVTRYLNIFGESQPNPKTVELLSGVVDQTKDGLISFQEFVAFESVLCAPDALFMVAFQLFDKAGKGEVTFEDVRQVFGQTTIHQHIPFNWDSEFVQLHFGKERKRHLTYAEFTQFLLEIQLEHAKQAFVQRDNAKTGKVTAIDFRDIMVTIRPHVLTPFVEECLVAAAGGTRSHQVSFSYFNGFNSLLNNMELIRKIYSTLAGSRKDVEVTKEEFALAAQKFGQVTPMEVDILFQLADLYEPRGRMTLADIERIAPLEEGMLPFNLAEAQRQQKASGDAARPFLLQLAESAYRFGLGSIAGAVGATAVYPIDLVKTRMQNQRSTGSFVGELMYKNSFDCFKKVLRYEGFFGLYRGLLPQLLGVAPEKAIKLTVNDFVRDKFMHKDGSVPLLAEIFAGGCAGGSQVIFTNPLEIVKIRLQVAGEITTGPRVSALSVVRDLGFFGIYKGAKACFLRDIPFSAIYFPCYAHVKASFANEDGQVSPGSLLLAGAIAGMPAASLVTPADVIKTRLQVAARAGQTTYSGVTDCFRKILREEGPKALWKGAGARVFRSSPQFGVTLLTYELLQRWFYVDFGGVKPVGSELVPKSRITLPAPNPDHVGGYKLAVATFAGIENKFGLYLPLFKPSASTSKVTAVGS.

Ala-2 carries the post-translational modification N-acetylalanine. The interval 2 to 295 (AAAKVALTKR…TLADIERIAP (294 aa)) is regulatory N-terminal domain. The Mitochondrial intermembrane portion of the chain corresponds to 2–332 (AAAKVALTKR…LLQLAESAYR (331 aa)). EF-hand domains lie at 51-86 (SQPN…SVLC), 87-122 (APDA…TTIH), 125-157 (IPFN…FLLE), and 158-193 (IQLE…IRPH). Residues Asp-66, Thr-68, Asp-70, Leu-72, and Glu-77 each contribute to the Ca(2+) site. The segment at 296–312 (LEEGMLPFNLAEAQRQQ) is linker loop domain. The interval 322–613 (FLLQLAESAY…LQRWFYVDFG (292 aa)) is carrier domain. Solcar repeat units follow at residues 327-419 (AESA…VRDK), 427-511 (VPLL…VKAS), and 519-607 (VSPG…LQRW). A helical membrane pass occupies residues 333 to 350 (FGLGSIAGAVGATAVYPI). Topologically, residues 351-393 (DLVKTRMQNQRSTGSFVGELMYKNSFDCFKKVLRYEGFFGLYR) are mitochondrial matrix. N6-acetyllysine occurs at positions 354 and 373. A helical transmembrane segment spans residues 394-413 (GLLPQLLGVAPEKAIKLTVN). Residues 414–436 (DFVRDKFMHKDGSVPLLAEIFAG) are Mitochondrial intermembrane-facing. A helical membrane pass occupies residues 437–450 (GCAGGSQVIFTNPL). Residues 451–485 (EIVKIRLQVAGEITTGPRVSALSVVRDLGFFGIYK) lie on the Mitochondrial matrix side of the membrane. At Lys-454 the chain carries N6-methyllysine. Lys-485 bears the N6-acetyllysine; alternate mark. Lys-485 is subject to N6-succinyllysine; alternate. The helical transmembrane segment at 486–505 (GAKACFLRDIPFSAIYFPCY) threads the bilayer. The Mitochondrial intermembrane segment spans residues 506 to 524 (AHVKASFANEDGQVSPGSL). The helical transmembrane segment at 525-542 (LLAGAIAGMPAASLVTPA) threads the bilayer. Over 543 to 581 (DVIKTRLQVAARAGQTTYSGVTDCFRKILREEGPKALWK) the chain is Mitochondrial matrix. Lys-581 is modified (N6-succinyllysine). A helical transmembrane segment spans residues 582-601 (GAGARVFRSSPQFGVTLLTY). The Mitochondrial intermembrane segment spans residues 602 to 676 (ELLQRWFYVD…STSKVTAVGS (75 aa)). The tract at residues 614-676 (GVKPVGSELV…STSKVTAVGS (63 aa)) is C-terminal domain. Residue Lys-663 is modified to N6-acetyllysine. Ser-667 carries the post-translational modification Phosphoserine.

The protein belongs to the mitochondrial carrier (TC 2.A.29) family. Homodimer (via N-terminus).

It is found in the mitochondrion inner membrane. It carries out the reaction L-aspartate(in) + L-glutamate(out) + H(+)(out) = L-aspartate(out) + L-glutamate(in) + H(+)(in). It catalyses the reaction 3-sulfino-L-alanine(out) + L-glutamate(in) + H(+)(in) = 3-sulfino-L-alanine(in) + L-glutamate(out) + H(+)(out). The enzyme catalyses 3-sulfino-L-alanine(out) + L-aspartate(in) = 3-sulfino-L-alanine(in) + L-aspartate(out). With respect to regulation, L-aspartate and 3-sulfino-L-alanine uptake are both inhibited by glisoxepide. In terms of biological role, mitochondrial electrogenic aspartate/glutamate antiporter that favors efflux of aspartate and entry of glutamate and proton within the mitochondria as part of the malate-aspartate shuttle. Also mediates the uptake of L-cysteinesulfinate (3-sulfino-L-alanine) by mitochondria in exchange of L-glutamate and proton. Can also exchange L-cysteinesulfinate with aspartate in their anionic form without any proton translocation. Lacks transport activity towards gamma-aminobutyric acid (GABA). The chain is Electrogenic aspartate/glutamate antiporter SLC25A13, mitochondrial from Rattus norvegicus (Rat).